The following is a 306-amino-acid chain: Leucine-rich repeat-containing protein 59 (306 aa).

M1 is modified (N-acetylmethionine). T2 is subject to N-acetylthreonine; in Leucine-rich repeat-containing protein 59, N-terminally processed. Residues 2 to 244 lie on the Cytoplasmic side of the membrane; sequence TKAGSKGGNL…KPPPRKHTRS (243 aa). LRR repeat units follow at residues 10-31, 40-62, 63-84, 86-107, and 109-128; these read NLRD…NEVP, KATV…CGLT, HLVK…FGRL, NLQH…FAQL, and SLKW…AKVA. Residues S23 and S25 each carry the phosphoserine modification. K73 carries the post-translational modification N6-succinyllysine. K135 is modified (N6-acetyllysine). A coiled-coil region spans residues 152–216; that stretch reads QADQERERQR…KAAKREQEKK (65 aa). Residues 175–221 are compositionally biased toward basic and acidic residues; sequence AKQRAKEAQERELRKREKAEEKERRRKEYDALKAAKREQEKKPKKET. The segment at 175-241 is disordered; it reads AKQRAKEAQE…RPRKPPPRKH (67 aa). A compositionally biased stretch (basic residues) spans 229 to 241; sequence SSSRPRKPPPRKH. The chain crosses the membrane as a helical span at residues 245 to 265; the sequence is WAVLKLLLLLLLCVAGGLVAC. At 266–306 the chain is on the lumenal side; sequence RVTELQQQPLCTSVNTIYDNAVRGLRSHDILQWVLQTDSQQ.

As to quaternary structure, can form homodimers. Interacts with SGO1. Interacts with FGF1.

Its subcellular location is the microsome membrane. The protein resides in the endoplasmic reticulum membrane. The protein localises to the nucleus envelope. Functionally, required for nuclear import of FGF1, but not that of FGF2. Might regulate nuclear import of exogenous FGF1 by facilitating interaction with the nuclear import machinery and by transporting cytosolic FGF1 to, and possibly through, the nuclear pores. This Bos taurus (Bovine) protein is Leucine-rich repeat-containing protein 59 (LRRC59).